The primary structure comprises 264 residues: Adenosylcobinamide-GDP ribazoletransferase (264 aa).

The next 6 membrane-spanning stretches (helical) occupy residues 39 to 59 (IAYA…AILI), 63 to 83 (ALGL…VLLT), 121 to 141 (ACAL…LLAL), 148 to 168 (LALI…LEFL), 201 to 221 (LLIV…LSVL), and 241 to 261 (VAGA…LIYA).

The protein belongs to the CobS family. The cofactor is Mg(2+).

The protein localises to the cell inner membrane. The catalysed reaction is alpha-ribazole + adenosylcob(III)inamide-GDP = adenosylcob(III)alamin + GMP + H(+). The enzyme catalyses alpha-ribazole 5'-phosphate + adenosylcob(III)inamide-GDP = adenosylcob(III)alamin 5'-phosphate + GMP + H(+). The protein operates within cofactor biosynthesis; adenosylcobalamin biosynthesis; adenosylcobalamin from cob(II)yrinate a,c-diamide: step 7/7. Its function is as follows. Joins adenosylcobinamide-GDP and alpha-ribazole to generate adenosylcobalamin (Ado-cobalamin). Also synthesizes adenosylcobalamin 5'-phosphate from adenosylcobinamide-GDP and alpha-ribazole 5'-phosphate. The chain is Adenosylcobinamide-GDP ribazoletransferase from Azorhizobium caulinodans (strain ATCC 43989 / DSM 5975 / JCM 20966 / LMG 6465 / NBRC 14845 / NCIMB 13405 / ORS 571).